The chain runs to 495 residues: Glutamyl-tRNA(Gln) amidotransferase subunit A (495 aa).

Catalysis depends on charge relay system residues K75 and S150. Catalysis depends on S174, which acts as the Acyl-ester intermediate.

It belongs to the amidase family. GatA subfamily. Heterotrimer of A, B and C subunits.

The enzyme catalyses L-glutamyl-tRNA(Gln) + L-glutamine + ATP + H2O = L-glutaminyl-tRNA(Gln) + L-glutamate + ADP + phosphate + H(+). In terms of biological role, allows the formation of correctly charged Gln-tRNA(Gln) through the transamidation of misacylated Glu-tRNA(Gln) in organisms which lack glutaminyl-tRNA synthetase. The reaction takes place in the presence of glutamine and ATP through an activated gamma-phospho-Glu-tRNA(Gln). This Paraburkholderia xenovorans (strain LB400) protein is Glutamyl-tRNA(Gln) amidotransferase subunit A.